A 629-amino-acid polypeptide reads, in one-letter code: Translation initiation factor IF-2 (629 aa).

Positions 1–20 (MAKNIKTNKKPQQVNKKEMS) are disordered. The tr-type G domain occupies 127–297 (HRAPIVTIMG…LLIAEMQDYK (171 aa)). The interval 136–143 (GHVDHGKT) is G1. 136 to 143 (GHVDHGKT) contributes to the GTP binding site. Positions 161-165 (GITQA) are G2. A G3 region spans residues 183-186 (DTPG). GTP is bound by residues 183–187 (DTPGH) and 237–240 (NKCD). The G4 stretch occupies residues 237–240 (NKCD). Positions 273–275 (SAK) are G5.

It belongs to the TRAFAC class translation factor GTPase superfamily. Classic translation factor GTPase family. IF-2 subfamily.

The protein localises to the cytoplasm. Functionally, one of the essential components for the initiation of protein synthesis. Protects formylmethionyl-tRNA from spontaneous hydrolysis and promotes its binding to the 30S ribosomal subunits. Also involved in the hydrolysis of GTP during the formation of the 70S ribosomal complex. The protein is Translation initiation factor IF-2 of Mesoplasma florum (strain ATCC 33453 / NBRC 100688 / NCTC 11704 / L1) (Acholeplasma florum).